A 147-amino-acid polypeptide reads, in one-letter code: Hemoglobin subunit gamma (147 aa).

Residues 3 to 147 form the Globin domain; it reads NFTAEDKAAI…VASALASRYH (145 aa). The heme b site is built by H64 and H93.

The protein belongs to the globin family. Heterotetramer of two alpha chains and two gamma chains in fetal hemoglobin (Hb F). As to expression, red blood cells.

Gamma chains make up the fetal hemoglobin F, in combination with alpha chains. The protein is Hemoglobin subunit gamma (HBG) of Alouatta belzebul (Red-handed howler monkey).